Reading from the N-terminus, the 411-residue chain is Serine hydroxymethyltransferase (411 aa).

(6S)-5,6,7,8-tetrahydrofolate-binding positions include L119 and 123-125; that span reads GHL. K228 is subject to N6-(pyridoxal phosphate)lysine.

Belongs to the SHMT family. Homodimer. The cofactor is pyridoxal 5'-phosphate.

It is found in the cytoplasm. It catalyses the reaction (6R)-5,10-methylene-5,6,7,8-tetrahydrofolate + glycine + H2O = (6S)-5,6,7,8-tetrahydrofolate + L-serine. Its pathway is one-carbon metabolism; tetrahydrofolate interconversion. The protein operates within amino-acid biosynthesis; glycine biosynthesis; glycine from L-serine: step 1/1. Its function is as follows. Catalyzes the reversible interconversion of serine and glycine with tetrahydrofolate (THF) serving as the one-carbon carrier. This reaction serves as the major source of one-carbon groups required for the biosynthesis of purines, thymidylate, methionine, and other important biomolecules. Also exhibits THF-independent aldolase activity toward beta-hydroxyamino acids, producing glycine and aldehydes, via a retro-aldol mechanism. The protein is Serine hydroxymethyltransferase of Clostridium kluyveri (strain NBRC 12016).